The sequence spans 60 residues: Metallothionein (60 aa).

A beta region spans residues 1 to 28 (MDPCECSKGGTCNCGGSCTCTNCSCTTC). A divalent metal cation contacts are provided by Cys-4, Cys-6, Cys-12, Cys-14, Cys-18, Cys-20, Cys-23, Cys-25, Cys-28, Cys-32, Cys-33, Cys-35, Cys-36, Cys-40, Cys-43, Cys-47, Cys-49, Cys-54, Cys-58, and Cys-59. Residues 29–60 (KKSCCPCCPSGCPKCASGCVCKGKTCDAACCQ) are alpha.

Belongs to the metallothionein superfamily. Type 1 family.

Its function is as follows. Metallothioneins have a high content of cysteine residues that bind various heavy metals. This Perca fluviatilis (European perch) protein is Metallothionein (mt).